A 485-amino-acid polypeptide reads, in one-letter code: Adenosylhomocysteinase (485 aa).

Substrate contacts are provided by T64, D139, and E205. 206–208 (TTT) provides a ligand contact to NAD(+). 2 residues coordinate substrate: K235 and D239. Residues N240, 269-274 (GYGDVG), E292, N327, 348-350 (IGH), and N397 each bind NAD(+).

It belongs to the adenosylhomocysteinase family. It depends on NAD(+) as a cofactor.

The catalysed reaction is S-adenosyl-L-homocysteine + H2O = L-homocysteine + adenosine. It participates in amino-acid biosynthesis; L-homocysteine biosynthesis; L-homocysteine from S-adenosyl-L-homocysteine: step 1/1. In terms of biological role, adenosylhomocysteine is a competitive inhibitor of S-adenosyl-L-methionine-dependent methyl transferase reactions; therefore adenosylhomocysteinase may play a key role in the control of methylations via regulation of the intracellular concentration of adenosylhomocysteine. In Phalaenopsis sp. (Moth orchid), this protein is Adenosylhomocysteinase (SAHH).